Consider the following 369-residue polypeptide: Anhydro-N-acetylmuramic acid kinase (369 aa).

Glycine 12–aspartate 19 lines the ATP pocket.

The protein belongs to the anhydro-N-acetylmuramic acid kinase family.

It carries out the reaction 1,6-anhydro-N-acetyl-beta-muramate + ATP + H2O = N-acetyl-D-muramate 6-phosphate + ADP + H(+). It functions in the pathway amino-sugar metabolism; 1,6-anhydro-N-acetylmuramate degradation. It participates in cell wall biogenesis; peptidoglycan recycling. Catalyzes the specific phosphorylation of 1,6-anhydro-N-acetylmuramic acid (anhMurNAc) with the simultaneous cleavage of the 1,6-anhydro ring, generating MurNAc-6-P. Is required for the utilization of anhMurNAc either imported from the medium or derived from its own cell wall murein, and thus plays a role in cell wall recycling. The polypeptide is Anhydro-N-acetylmuramic acid kinase (Shewanella baltica (strain OS223)).